A 1507-amino-acid chain; its full sequence is MVSLIDTIEAAAEKQKQSQAVVTNTSASSSSCSSSFSSSPPSSSVGSPSPGAPKTNLTASGKPKEKRRNNEKRKEKSRDAARCRRSKETEIFMELSAALPLKTDDVNQLDKASVMRITIAFLKIREMLQFVPSLRDCNDDIKQDIETAEDQQEVKPKLEVGTEDWLNGAEARELLKQTMDGFLLVLSHEGDITYVSENVVEYLGITKIDTLGQQIWEYSHQCDHAEIKEALSLKRELAQKVKDEPQQNSGVSTHHRDLFVRLKCTLTSRGRSINIKSASYKVIHITGHLVVNAKGERLLMAIGRPIPHPSNIEIPLGTSTFLTKHSLDMRFTYVDDKMHDLLGYSPKDLLDTSLFSCQHGADSERLMATFKSVLSKGQGETSRYRFLGKYGGYCWILSQATIVYDKLKPQSVVCVNYVISNLENKHEIYSLAQQTAASEQKEQHHQAAETEKEPEKAADPEIIAQETKETVNTPIHTSELQAKPLQLESEKAEKTIEETKTIATIPPVTATSTADQIKQLPESNPYKQILQAELLIKRENHSPGPRTITAQLLSGSSSGLRPEEKRPKSVTASVLRPSPAPPLTPPPTAVLCKKTPLGVEPNLPPTTTATAAIISSSNQQLQIAQQTQLQNPQQPAQDMSKGFCSLFADDGRGLTMLKEEPDDLSHHLASTNCIQLDEMTPFSDMLVGLMGTCLLPEDINSLDSTTCSTTASGQHYQSPSSSSTSAPSNTSSSNNSYANSPLSPLTPNSTATASNPSHQQQQQHHNQQQQQQQQQQHHPQHHDNSNSSSNIDPLFNYREESNDTSCSQHLHSPSITSKSPEDSSLPSLCSPNSLTQEDDFSFEAFAMRAPYIPIDDDMPLLTETDLMWCPPEDLQTMVPKEIDAIQQQLQQLQQQHHQQYAGNTGYQQQQQQPQLQQQHFSNSLCSSPASTVSSLSPSPVQQHHQQQQAAVFTSDSSELAALLCGSGNGTLSILAGSGVTVAEECNERLQQHQQQQQQTSGNEFRTFQQLQQELQLQEEQQQRQQQQQQQQQQQQQQQLLSLNIECKKEKYDVQMGGSLCHPMEDAFENDYSKDSANLDCWDLIQMQVVDTEPVSPNAASPTPCKVSAIQLLQQQQQLQQQQQQQQNIILNAVPLITIQNNKELMQQQQQQQQQQQQEQLQQPAIKLLNGASIAPVNTKATIRLVESKPPTTTQSRMAKVNLVPQQQQHGNKRHLNSATGAGNPVESKRLKSGTLCLDVQSPQLLQQLIGKDPAQQQTQAAKRAGSERWQLSAESKQQKQQQQQSNSVLKNLLVSGRDDDDSEAMIIDEDNSLVQPIPLGKYGLPLHCHTSTSSVLRDYHNNPLISGTNFQLSPVFGGSDSSGGDGETGSVVSLDDSVPPGLTACDTDASSDSGIDENSLMDGASGSPRKRLSSTSNSTNQAESAPPALDVETPVTQKSVEEEFEGGGSGSNAPSRKTSISFLDSSNPLLHTPAMMDLVNDDYIMGEGGFEFSDNQLEQVLGWPEIA.

A disordered region spans residues 1 to 85 (MVSLIDTIEA…KSRDAARCRR (85 aa)). Low complexity predominate over residues 26-49 (SASSSSCSSSFSSSPPSSSVGSPS). Over residues 72–85 (KRKEKSRDAARCRR) the composition is skewed to basic and acidic residues. In terms of domain architecture, bHLH spans 72 to 125 (KRKEKSRDAARCRRSKETEIFMELSAALPLKTDDVNQLDKASVMRITIAFLKIR). 2 PAS domains span residues 167–240 (NGAE…LAQK) and 307–377 (PHPS…LSKG). In terms of domain architecture, PAC spans 381 to 422 (TSRYRFLGKYGGYCWILSQATIVYDKLKPQSVVCVNYVISNL). Disordered stretches follow at residues 433-459 (QQTA…KAAD), 541-588 (HSPG…PPPT), 706-832 (TCST…CSPN), and 900-951 (YAGN…QAAV). Over residues 439-459 (EQKEQHHQAAETEKEPEKAAD) the composition is skewed to basic and acidic residues. Positions 548–559 (ITAQLLSGSSSG) are enriched in polar residues. Pro residues predominate over residues 578-588 (SPAPPLTPPPT). Positions 692 to 863 (TCLLPEDINS…IDDDMPLLTE (172 aa)) are ODD. The segment covering 706 to 717 (TCSTTASGQHYQ) has biased composition (polar residues). Composition is skewed to low complexity over residues 718–745 (SPSS…LSPL) and 754–777 (SNPS…QQQH). Residues 803-818 (DTSCSQHLHSPSITSK) are compositionally biased toward polar residues. Low complexity-rich tracts occupy residues 823-832 (SSLPSLCSPN), 907-918 (QQQQQQPQLQQQ), and 926-951 (SSPA…QAAV). The stretch at 880–908 (KEIDAIQQQLQQLQQQHHQQYAGNTGYQQ) forms a coiled coil. Coiled coils occupy residues 982 to 1054 (AEEC…YDVQ) and 1110 to 1162 (QLLQ…QLQQ). 3 disordered regions span residues 1204–1228 (PQQQ…VESK), 1251–1287 (KDPA…QSNS), and 1356–1460 (FGGS…KTSI). The segment covering 1413 to 1423 (SSTSNSTNQAE) has biased composition (polar residues).

In terms of assembly, efficient DNA binding requires dimerization with another bHLH protein. Interacts with Vhl. As to expression, ubiquitously expressed in the embryo.

Its subcellular location is the cytoplasm. It localises to the nucleus. Functionally, functions as a transcriptional regulator of the adaptive response to hypoxia. Binds to core DNA sequence 5'-[AG]CGTG-3' within the hypoxia response element (HRE) of target gene promoters. This is Protein similar (sima) from Drosophila melanogaster (Fruit fly).